A 354-amino-acid chain; its full sequence is L-lactate dehydrogenase (354 aa).

Residues 73-78 (DAVPDK) and Arg-120 each bind NAD(+). Substrate is bound by residues Arg-127, Asn-159, and Arg-190. Asn-159 contacts NAD(+). The active-site Proton acceptor is His-214. Thr-269 lines the substrate pocket. The interval 302–332 (HGIPDGTTSSSACPPRRPRRRPGRREMELTE) is disordered.

It belongs to the LDH/MDH superfamily. LDH family. As to quaternary structure, homotetramer.

It catalyses the reaction (S)-lactate + NAD(+) = pyruvate + NADH + H(+). It participates in fermentation; pyruvate fermentation to lactate; (S)-lactate from pyruvate: step 1/1. The polypeptide is L-lactate dehydrogenase (Zea mays (Maize)).